A 146-amino-acid polypeptide reads, in one-letter code: Cystatin-C (146 aa).

The first 26 residues, 1 to 26 (MAGPLRAPLLLLAILAVALAVSPAAG), serve as a signal peptide directing secretion. S43 is subject to Phosphoserine; by FAM20C. A Secondary area of contact motif is present at residues 81-85 (QIVAG). Disulfide bonds link C99-C109 and C123-C143.

Belongs to the cystatin family. Homodimer. Post-translationally, the Thr-25 variant is O-glycosylated with a core 1 or possibly core 8 glycan. The signal peptide of the O-glycosylated Thr-25 variant is cleaved between Ala-20 and Val-21. As to expression, expressed in submandibular and sublingual saliva but not in parotid saliva (at protein level). Expressed in various body fluids, such as the cerebrospinal fluid and plasma. Expressed in highest levels in the epididymis, vas deferens, brain, thymus, and ovary and the lowest in the submandibular gland.

It is found in the secreted. Functionally, as an inhibitor of cysteine proteinases, this protein is thought to serve an important physiological role as a local regulator of this enzyme activity. The chain is Cystatin-C (CST3) from Homo sapiens (Human).